Here is a 120-residue protein sequence, read N- to C-terminus: Large ribosomal subunit protein uL18 (120 aa).

It belongs to the universal ribosomal protein uL18 family. As to quaternary structure, part of the 50S ribosomal subunit; part of the 5S rRNA/L5/L18/L25 subcomplex. Contacts the 5S and 23S rRNAs.

This is one of the proteins that bind and probably mediate the attachment of the 5S RNA into the large ribosomal subunit, where it forms part of the central protuberance. The chain is Large ribosomal subunit protein uL18 from Bacillus licheniformis (strain ATCC 14580 / DSM 13 / JCM 2505 / CCUG 7422 / NBRC 12200 / NCIMB 9375 / NCTC 10341 / NRRL NRS-1264 / Gibson 46).